A 476-amino-acid polypeptide reads, in one-letter code: tRNA(Ile)-lysidine synthase (476 aa).

30 to 35 is an ATP binding site; it reads SGGPDS.

This sequence belongs to the tRNA(Ile)-lysidine synthase family.

The protein localises to the cytoplasm. The enzyme catalyses cytidine(34) in tRNA(Ile2) + L-lysine + ATP = lysidine(34) in tRNA(Ile2) + AMP + diphosphate + H(+). Functionally, ligates lysine onto the cytidine present at position 34 of the AUA codon-specific tRNA(Ile) that contains the anticodon CAU, in an ATP-dependent manner. Cytidine is converted to lysidine, thus changing the amino acid specificity of the tRNA from methionine to isoleucine. The polypeptide is tRNA(Ile)-lysidine synthase (Bacillus cereus (strain ZK / E33L)).